We begin with the raw amino-acid sequence, 513 residues long: Histidine ammonia-lyase (513 aa).

Positions alanine 144–glycine 146 form a cross-link, 5-imidazolinone (Ala-Gly). At serine 145 the chain carries 2,3-didehydroalanine (Ser).

Belongs to the PAL/histidase family. In terms of processing, contains an active site 4-methylidene-imidazol-5-one (MIO), which is formed autocatalytically by cyclization and dehydration of residues Ala-Ser-Gly.

Its subcellular location is the cytoplasm. The enzyme catalyses L-histidine = trans-urocanate + NH4(+). Its pathway is amino-acid degradation; L-histidine degradation into L-glutamate; N-formimidoyl-L-glutamate from L-histidine: step 1/3. The polypeptide is Histidine ammonia-lyase (Streptococcus pyogenes serotype M1).